Consider the following 401-residue polypeptide: Enolase (401 aa).

Q154 serves as a coordination point for (2R)-2-phosphoglycerate. Catalysis depends on E196, which acts as the Proton donor. Mg(2+) contacts are provided by D232, E275, and D302. (2R)-2-phosphoglycerate is bound by residues K327, R356, S357, and K378. The active-site Proton acceptor is the K327.

The protein belongs to the enolase family. It depends on Mg(2+) as a cofactor.

Its subcellular location is the cytoplasm. The protein resides in the secreted. It localises to the cell surface. The catalysed reaction is (2R)-2-phosphoglycerate = phosphoenolpyruvate + H2O. The protein operates within carbohydrate degradation; glycolysis; pyruvate from D-glyceraldehyde 3-phosphate: step 4/5. Its function is as follows. Catalyzes the reversible conversion of 2-phosphoglycerate (2-PG) into phosphoenolpyruvate (PEP). It is essential for the degradation of carbohydrates via glycolysis. In Haloquadratum walsbyi (strain DSM 16790 / HBSQ001), this protein is Enolase.